The primary structure comprises 204 residues: Glycerol-3-phosphate acyltransferase (204 aa).

5 consecutive transmembrane segments (helical) span residues Tyr-6–Ala-26, Leu-80–His-100, Leu-122–Ile-142, Lys-144–Val-164, and Ala-168–Ile-188.

This sequence belongs to the PlsY family. Probably interacts with PlsX.

It is found in the cell membrane. It carries out the reaction an acyl phosphate + sn-glycerol 3-phosphate = a 1-acyl-sn-glycero-3-phosphate + phosphate. The protein operates within lipid metabolism; phospholipid metabolism. Functionally, catalyzes the transfer of an acyl group from acyl-phosphate (acyl-PO(4)) to glycerol-3-phosphate (G3P) to form lysophosphatidic acid (LPA). This enzyme utilizes acyl-phosphate as fatty acyl donor, but not acyl-CoA or acyl-ACP. This is Glycerol-3-phosphate acyltransferase from Clostridioides difficile (strain 630) (Peptoclostridium difficile).